The sequence spans 133 residues: Small ribosomal subunit protein uS8 (133 aa).

This sequence belongs to the universal ribosomal protein uS8 family. As to quaternary structure, part of the 30S ribosomal subunit.

In terms of biological role, one of the primary rRNA binding proteins, it binds directly to 16S rRNA central domain where it helps coordinate assembly of the platform of the 30S subunit. This is Small ribosomal subunit protein uS8 from Hyperthermus butylicus (strain DSM 5456 / JCM 9403 / PLM1-5).